Reading from the N-terminus, the 249-residue chain is Ribonuclease 3 (249 aa).

An RNase III domain is found at 20–149 (FKKFQERISV…FIGALYLDQG (130 aa)). Glu-62 contacts Mg(2+). Asp-66 is a catalytic residue. 2 residues coordinate Mg(2+): Asp-135 and Glu-138. Residue Glu-138 is part of the active site. The DRBM domain occupies 175 to 244 (DFKSQLQEFV…AQEALAKLQK (70 aa)). Positions 225 to 249 (RSKKEAEQHAAQEALAKLQKHHMKQ) are disordered.

This sequence belongs to the ribonuclease III family. In terms of assembly, homodimer. Mg(2+) is required as a cofactor.

The protein localises to the cytoplasm. It carries out the reaction Endonucleolytic cleavage to 5'-phosphomonoester.. Functionally, digests double-stranded RNA. Involved in the processing of primary rRNA transcript to yield the immediate precursors to the large and small rRNAs (23S and 16S). Processes some mRNAs, and tRNAs when they are encoded in the rRNA operon. Processes pre-crRNA and tracrRNA of type II CRISPR loci if present in the organism. The sequence is that of Ribonuclease 3 from Bacillus licheniformis (strain ATCC 14580 / DSM 13 / JCM 2505 / CCUG 7422 / NBRC 12200 / NCIMB 9375 / NCTC 10341 / NRRL NRS-1264 / Gibson 46).